The chain runs to 252 residues: Sororin (252 aa).

Disordered regions lie at residues 1–48 (MSGR…WPKT) and 72–142 (AVQS…SKKV). Serine 21, serine 33, serine 35, serine 75, serine 79, and serine 83 each carry phosphoserine. Positions 86 to 104 (LEKENEPPGRELTKEDLFK) are enriched in basic and acidic residues. Positions 88 to 90 (KEN) match the KEN box motif. Residue threonine 98 is modified to Phosphothreonine. Over residues 105–116 (THSVPATPTSTP) the composition is skewed to low complexity. Serine 107 carries the post-translational modification Phosphoserine. Phosphothreonine is present on residues threonine 111 and threonine 115. Over residues 124–140 (SSSKEGELDARDLEMSK) the composition is skewed to basic and acidic residues. Serine 154 is modified (phosphoserine). Threonine 159 carries the post-translational modification Phosphothreonine. The short motif at 166-168 (FGF) is the FGF motif element. A disordered region spans residues 199–222 (WAPDMTLPGISPPPEKQKRKKKKM). A Phosphoserine modification is found at serine 209. A C-terminal Sororin domain region spans residues 230 to 252 (LDEWAAAMNAEFEAAEQFDLLVE).

This sequence belongs to the sororin family. As to quaternary structure, interacts with the APC/C complex. Interacts with the chromatin-bound cohesin complex; the interaction is indirect, occurs after DNA replication and requires acetylation of the cohesin component SMC3. Interacts (via the FGF motif) with PDS5A and PDS5B; the interaction is direct and prevents the interaction of PDS5A with WAPL. Phosphorylated. Phosphorylation, as cells enter mitosis, disrupts the interaction with PDS5A and relieves the inhibition of WAPL by CDCA5. In terms of processing, ubiquitinated by the APC/C complex in G1, leading to its degradation.

Its subcellular location is the nucleus. It is found in the chromosome. The protein resides in the cytoplasm. Its function is as follows. Regulator of sister chromatid cohesion in mitosis stabilizing cohesin complex association with chromatin. May antagonize the action of WAPL which stimulates cohesin dissociation from chromatin. Cohesion ensures that chromosome partitioning is accurate in both meiotic and mitotic cells and plays an important role in DNA repair. Required for efficient DNA double-stranded break repair. The protein is Sororin (CDCA5) of Homo sapiens (Human).